We begin with the raw amino-acid sequence, 266 residues long: Undecaprenyl-diphosphatase (266 aa).

The next 8 helical transmembrane spans lie at Ile4–Ser24, Leu39–Tyr59, Leu86–Ile106, Met112–Leu132, Ile145–Ser165, Lys182–Leu202, Ile210–Gly230, and Leu246–Ile266.

The protein belongs to the UppP family.

The protein localises to the cell inner membrane. It carries out the reaction di-trans,octa-cis-undecaprenyl diphosphate + H2O = di-trans,octa-cis-undecaprenyl phosphate + phosphate + H(+). In terms of biological role, catalyzes the dephosphorylation of undecaprenyl diphosphate (UPP). Confers resistance to bacitracin. This Borreliella burgdorferi (strain ATCC 35210 / DSM 4680 / CIP 102532 / B31) (Borrelia burgdorferi) protein is Undecaprenyl-diphosphatase.